A 160-amino-acid polypeptide reads, in one-letter code: Major pollen allergen Bet v 1-J (160 aa).

The brassinolide site is built by K55, Y82, Y84, and N101. Hydrophobic ligand pocket regions lie at residues 116 to 118 and 133 to 141; these read KIN and QIKASKEMG.

It belongs to the BetVI family. Pollen.

It is found in the cytoplasm. In terms of biological role, may be a general steroid carrier protein. The chain is Major pollen allergen Bet v 1-J from Betula pendula (European white birch).